The sequence spans 271 residues: 3-methyl-2-oxobutanoate hydroxymethyltransferase (271 aa).

Mg(2+) is bound by residues aspartate 50 and aspartate 89. 3-methyl-2-oxobutanoate contacts are provided by residues 50-51 (DS), aspartate 89, and lysine 118. Glutamate 120 provides a ligand contact to Mg(2+). Catalysis depends on glutamate 187, which acts as the Proton acceptor.

The protein belongs to the PanB family. As to quaternary structure, homodecamer; pentamer of dimers. The cofactor is Mg(2+).

The protein localises to the cytoplasm. It catalyses the reaction 3-methyl-2-oxobutanoate + (6R)-5,10-methylene-5,6,7,8-tetrahydrofolate + H2O = 2-dehydropantoate + (6S)-5,6,7,8-tetrahydrofolate. The protein operates within cofactor biosynthesis; (R)-pantothenate biosynthesis; (R)-pantoate from 3-methyl-2-oxobutanoate: step 1/2. Its function is as follows. Catalyzes the reversible reaction in which hydroxymethyl group from 5,10-methylenetetrahydrofolate is transferred onto alpha-ketoisovalerate to form ketopantoate. This chain is 3-methyl-2-oxobutanoate hydroxymethyltransferase, found in Campylobacter concisus (strain 13826).